Consider the following 523-residue polypeptide: Sugar carrier protein C (523 aa).

Residues Met-1–Val-25 lie on the Cytoplasmic side of the membrane. 12 consecutive transmembrane segments (helical) span residues Thr-26–Ser-46, Met-86–Thr-106, Val-120–Leu-140, Ile-143–Met-163, Leu-172–Tyr-192, Leu-205–Pro-225, Leu-298–Asp-320, Val-327–Trp-347, Phe-351–Ile-371, Trp-387–Trp-407, Ser-433–Leu-453, and Gly-456–Leu-476. Residues Pro-477 to Val-523 are Cytoplasmic-facing.

The protein belongs to the major facilitator superfamily. Sugar transporter (TC 2.A.1.1) family.

It is found in the membrane. The sequence is that of Sugar carrier protein C (STC) from Ricinus communis (Castor bean).